The following is a 793-amino-acid chain: Putative dipeptidyl aminopeptidase C2E11.08 (793 aa).

Over 1-24 (MNDFSFEDKGLISRSGFGSRHVRR) the chain is Cytoplasmic. A helical; Signal-anchor for type II membrane protein transmembrane segment spans residues 25 to 45 (VVKALALIFSLLILYLTISNV). The Lumenal segment spans residues 46–793 (SDSPPKRDSL…STGVRQHRWD (748 aa)). N-linked (GlcNAc...) asparagine glycosylation is found at asparagine 101, asparagine 136, asparagine 246, asparagine 299, asparagine 303, asparagine 324, asparagine 336, asparagine 377, asparagine 384, asparagine 407, and asparagine 535. Active-site charge relay system residues include serine 647, aspartate 722, and histidine 755. The N-linked (GlcNAc...) asparagine glycan is linked to asparagine 761.

Belongs to the peptidase S9B family.

It localises to the vacuole membrane. This is Putative dipeptidyl aminopeptidase C2E11.08 from Schizosaccharomyces pombe (strain 972 / ATCC 24843) (Fission yeast).